The sequence spans 203 residues: ATP-dependent Clp protease proteolytic subunit 1 (203 aa).

S103 serves as the catalytic Nucleophile. Residue H128 is part of the active site.

Belongs to the peptidase S14 family. In terms of assembly, fourteen ClpP subunits assemble into 2 heptameric rings which stack back to back to give a disk-like structure with a central cavity, resembling the structure of eukaryotic proteasomes.

It is found in the cytoplasm. The enzyme catalyses Hydrolysis of proteins to small peptides in the presence of ATP and magnesium. alpha-casein is the usual test substrate. In the absence of ATP, only oligopeptides shorter than five residues are hydrolyzed (such as succinyl-Leu-Tyr-|-NHMec, and Leu-Tyr-Leu-|-Tyr-Trp, in which cleavage of the -Tyr-|-Leu- and -Tyr-|-Trp bonds also occurs).. Cleaves peptides in various proteins in a process that requires ATP hydrolysis. Has a chymotrypsin-like activity. Plays a major role in the degradation of misfolded proteins. In Treponema pallidum (strain Nichols), this protein is ATP-dependent Clp protease proteolytic subunit 1.